The primary structure comprises 626 residues: Leucine-rich repeat and fibronectin type-III domain-containing protein 3 (626 aa).

Positions 1-16 are cleaved as a signal peptide; sequence MAVLPLLLCLLPLAPA. Over 17–539 the chain is Extracellular; it reads SSPPQPATSS…PHAPFLGGTM (523 aa). Positions 19–59 constitute an LRRNT domain; it reads PPQPATSSPCPRRCRCQTQSLPLSVLCPGAGLLFVPPSLDR. LRR repeat units follow at residues 84 to 105, 108 to 129, 132 to 153, 157 to 178, 181 to 202, and 205 to 226; these read GLLHLSLSRNTIRHVAAGAFAD, ALRALHLDGNRLTSLGEGQLRG, NLRHLILSNNQLAALAAGALDD, TLEDLDLSYNNLEQLPWEALGR, NVNTLGLDHNLLASVPAGAFSR, and KLARLDMTSNRLTTIPPDPLFS. The 47-residue stretch at 249 to 295 folds into the LRRCT domain; it reads NPLHCNCELVWLRRLAREDDLEACASPPALGGRYFWAVGEEEFVCEP. The 88-residue stretch at 295–382 folds into the Ig-like domain; the sequence is PPVVTHRSPP…GEATAAVELT (88 aa). The Fibronectin type-III 1 domain occupies 308 to 395; that stretch reads PAGRPAALRC…PPPPQLANST (88 aa). Cysteines 317 and 366 form a disulfide. 3 N-linked (GlcNAc...) asparagine glycosylation sites follow: N339, N348, and N393. A disordered region spans residues 382 to 423; the sequence is TVGPPPPPQLANSTSCDPPRDGEPDALTPPSAASASAKVADT. A compositionally biased stretch (low complexity) spans 406–423; the sequence is DALTPPSAASASAKVADT. The Fibronectin type-III 2 domain maps to 425 to 523; it reads APTDRGVQVT…GCARFSTEPA (99 aa). Residues 540-560 form a helical membrane-spanning segment; that stretch reads IIALGGVIVASVLVFIFVLLL. At 561–626 the chain is on the cytoplasmic side; the sequence is RYKVHGVQPP…WGPSHEPAGP (66 aa).

Belongs to the LRFN family. As to quaternary structure, can form heteromeric complexes with LRFN1, LRFN2, LRFN4 and LRFN5. Able to form homomeric complexes across cell junctions, between adjacent cells. Does not interact with DLG4. In terms of processing, N-glycosylated. In terms of tissue distribution, expressed in brain. Within brain, expressed in hippocampus, cerebellum, olfactory bulb and forebrain (at protein level).

The protein localises to the cell membrane. It localises to the cell projection. It is found in the axon. Its subcellular location is the dendrite. The protein resides in the synapse. The protein localises to the presynaptic cell membrane. It localises to the postsynaptic cell membrane. Functionally, cell adhesion molecule that mediates homophilic cell-cell adhesion in a Ca(2+)-independent manner. Promotes neurite outgrowth in hippocampal neurons. The protein is Leucine-rich repeat and fibronectin type-III domain-containing protein 3 of Rattus norvegicus (Rat).